A 212-amino-acid polypeptide reads, in one-letter code: Thymidylate kinase (212 aa).

Position 2 is an N-acetylalanine (Ala2). Residues Arg16–Thr21 and Arg97 contribute to the ATP site. An LID region spans residues Leu133–Gln157. The residue at position 169 (Lys169) is an N6-acetyllysine. ATP is bound by residues Lys182 and Arg192.

The protein belongs to the thymidylate kinase family. Homodimer. Requires Mg(2+) as cofactor.

The enzyme catalyses dTMP + ATP = dTDP + ADP. It participates in pyrimidine metabolism; dTTP biosynthesis. Functionally, catalyzes the phosphorylation of thymidine monophosphate (dTMP) to thymidine diphosphate (dTDP), the immediate precursor for the DNA building block dTTP, with ATP as the preferred phosphoryl donor in the presence of Mg(2+). This is Thymidylate kinase (DTYMK) from Homo sapiens (Human).